The following is a 518-amino-acid chain: ATP synthase subunit alpha (518 aa).

169–176 provides a ligand contact to ATP; the sequence is GDRKTGKT.

This sequence belongs to the ATPase alpha/beta chains family. As to quaternary structure, F-type ATPases have 2 components, CF(1) - the catalytic core - and CF(0) - the membrane proton channel. CF(1) has five subunits: alpha(3), beta(3), gamma(1), delta(1), epsilon(1). CF(0) has three main subunits: a(1), b(2) and c(9-12). The alpha and beta chains form an alternating ring which encloses part of the gamma chain. CF(1) is attached to CF(0) by a central stalk formed by the gamma and epsilon chains, while a peripheral stalk is formed by the delta and b chains.

Its subcellular location is the cell membrane. The enzyme catalyses ATP + H2O + 4 H(+)(in) = ADP + phosphate + 5 H(+)(out). In terms of biological role, produces ATP from ADP in the presence of a proton gradient across the membrane. The alpha chain is a regulatory subunit. The polypeptide is ATP synthase subunit alpha (Enterococcus faecalis (strain ATCC 700802 / V583)).